A 333-amino-acid polypeptide reads, in one-letter code: Protein FLAP1 homolog A (333 aa).

The helical transmembrane segment at 26–46 (VVIIFVLAFTLVFTPTFEAEA) threads the bilayer. Positions 53–74 (IGGGSFRAPSAPSRSYSGPSGG) are disordered. Residues 58 to 70 (FRAPSAPSRSYSG) show a composition bias toward low complexity. 2 helical membrane passes run 92-112 (IIPFFGFGGGFGGIFGILVMI) and 261-281 (GEYILVTIIAAALGNLNLPAV).

It belongs to the FLAP family.

It localises to the cellular thylakoid membrane. The protein resides in the cell inner membrane. Its function is as follows. Essential for photosynthetic growth under fluctuating light by modulating PxcA- and PxcL-dependent intracellular pH regulation via proton transport (e.g. transient pH reduction upon transition from dark to light followed by an increase in the light until light-to-dark shift). In Synechocystis sp. (strain ATCC 27184 / PCC 6803 / Kazusa), this protein is Protein FLAP1 homolog A.